Consider the following 473-residue polypeptide: H(+)/Cl(-) exchange transporter ClcA (473 aa).

Topologically, residues 1 to 32 (MKTDTPSLETPQAARLRRRQLIRQLLERDKTP) are cytoplasmic. A helical membrane pass occupies residues 33–69 (LAILFMAAVVGTLVGLAAVAFDKGVAWLQNQRMGALV). The Periplasmic segment spans residues 70-76 (HTADNYP). The chain crosses the membrane as a helical span at residues 77–100 (LLLTVAFLCSAVLAMFGYFLVRKY). The short motif at 106-110 (GSGIP) is the Selectivity filter part_1 element. Residue Ser107 participates in chloride binding. An intramembrane region (helical) is located at residues 109 to 116 (IPEIEGAL). At 117–123 (EDQRPVR) the chain is on the cytoplasmic side. Transmembrane regions (helical) follow at residues 124 to 141 (WWRVLPVKFFGGLGTLGG) and 148 to 166 (EGPTVQIGGNISRMVLDIF). The Selectivity filter part_2 signature appears at 146-150 (GREGP). At 167–176 (RLKGDEARHT) the chain is on the cytoplasmic side. 2 intramembrane regions (helical) span residues 177–189 (LLATGAAAGLAAA) and 193–201 (PLAGILFII). Over 202-214 (EEMRPQFRYTLIS) the chain is Cytoplasmic. Residues 215 to 232 (IKAVFIGVIMSTIMYRIF) traverse the membrane as a helical segment. Residues 233–252 (NHEVALIDVGKLSDAPLNTL) are Periplasmic-facing. A helical membrane pass occupies residues 253-281 (WLYLILGIIFGIFGPIFNKWVLGMQDLLH). The Cytoplasmic portion of the chain corresponds to 282 to 287 (RVHGGN). A helical membrane pass occupies residues 288-309 (ITKWVLMGGAIGGLCGLLGFVA). The Periplasmic portion of the chain corresponds to 310-329 (PATSGGGFNLIPIATAGNFS). Helical transmembrane passes span 330–349 (MGMLVFIFVARVITTLLCFS) and 355–376 (GIFAPMLALGTVLGTAFGMVAV). Positions 355 to 359 (GIFAP) match the Selectivity filter part_3 motif. The chloride site is built by Ile356 and Phe357. At 377-386 (ELFPQYHLEA) the chain is on the periplasmic side. Residues 387–401 (GTFAIAGMGALLAAS) constitute an intramembrane region (helical). The segment at residues 402–404 (IRA) is an intramembrane region (note=Loop between two helices). The segment at residues 405–416 (PLTGIILVLEMT) is an intramembrane region (helical). The note=Loop between two helices intramembrane region spans 417 to 421 (DNYQL). Residues 422 to 438 (ILPMIITGLGATLLAQF) traverse the membrane as a helical segment. Residues 439–473 (TGGKPLYSAILARTLAKQEAEQLARSKAASASENT) are Cytoplasmic-facing. Position 445 (Tyr445) interacts with chloride.

It belongs to the chloride channel (TC 2.A.49) family. ClcA subfamily. Homodimer.

The protein resides in the cell inner membrane. The enzyme catalyses 2 chloride(in) + H(+)(out) = 2 chloride(out) + H(+)(in). Its function is as follows. Proton-coupled chloride transporter. Functions as antiport system and exchanges two chloride ions for 1 proton. Probably acts as an electrical shunt for an outwardly-directed proton pump that is linked to amino acid decarboxylation, as part of the extreme acid resistance (XAR) response. This is H(+)/Cl(-) exchange transporter ClcA from Shigella flexneri serotype 5b (strain 8401).